Reading from the N-terminus, the 265-residue chain is 4-diphosphocytidyl-2-C-methyl-D-erythritol kinase (265 aa).

The active site involves Lys-8. An ATP-binding site is contributed by 95–105 (PIGAGLGGGSS). Asp-135 is an active-site residue.

This sequence belongs to the GHMP kinase family. IspE subfamily.

The catalysed reaction is 4-CDP-2-C-methyl-D-erythritol + ATP = 4-CDP-2-C-methyl-D-erythritol 2-phosphate + ADP + H(+). It functions in the pathway isoprenoid biosynthesis; isopentenyl diphosphate biosynthesis via DXP pathway; isopentenyl diphosphate from 1-deoxy-D-xylulose 5-phosphate: step 3/6. Catalyzes the phosphorylation of the position 2 hydroxy group of 4-diphosphocytidyl-2C-methyl-D-erythritol. This is 4-diphosphocytidyl-2-C-methyl-D-erythritol kinase from Ureaplasma parvum serovar 3 (strain ATCC 27815 / 27 / NCTC 11736).